The primary structure comprises 688 residues: UvrABC system protein B (688 aa).

Residues 31-188 (GRVNAGEPDV…RKFVSMQYQR (158 aa)) form the Helicase ATP-binding domain. ATP is bound at residue 44–51 (GATGTGKS). The short motif at 97-120 (YYDYYQPEAYVPQTDTFIEKDSSV) is the Beta-hairpin element. Positions 434-587 (QIDDLLEQIR…QVAYNTEHGI (154 aa)) constitute a Helicase C-terminal domain. Residues 607–632 (GEDTKKMLEGRGGGKRSPTPNLRREG) form a disordered region. Residues 642-677 (ETIISDLNDQMLQAAGELKFELAARLRDELGDLKRE) form the UVR domain.

The protein belongs to the UvrB family. Forms a heterotetramer with UvrA during the search for lesions. Interacts with UvrC in an incision complex.

Its subcellular location is the cytoplasm. The UvrABC repair system catalyzes the recognition and processing of DNA lesions. A damage recognition complex composed of 2 UvrA and 2 UvrB subunits scans DNA for abnormalities. Upon binding of the UvrA(2)B(2) complex to a putative damaged site, the DNA wraps around one UvrB monomer. DNA wrap is dependent on ATP binding by UvrB and probably causes local melting of the DNA helix, facilitating insertion of UvrB beta-hairpin between the DNA strands. Then UvrB probes one DNA strand for the presence of a lesion. If a lesion is found the UvrA subunits dissociate and the UvrB-DNA preincision complex is formed. This complex is subsequently bound by UvrC and the second UvrB is released. If no lesion is found, the DNA wraps around the other UvrB subunit that will check the other stand for damage. The sequence is that of UvrABC system protein B from Clavibacter michiganensis subsp. michiganensis (strain NCPPB 382).